We begin with the raw amino-acid sequence, 183 residues long: ATP-dependent protease subunit HslV (183 aa).

Thr10 is an active-site residue. Na(+) contacts are provided by Ala164, Cys167, and Thr170.

The protein belongs to the peptidase T1B family. HslV subfamily. As to quaternary structure, a double ring-shaped homohexamer of HslV is capped on each side by a ring-shaped HslU homohexamer. The assembly of the HslU/HslV complex is dependent on binding of ATP.

It is found in the cytoplasm. It catalyses the reaction ATP-dependent cleavage of peptide bonds with broad specificity.. Allosterically activated by HslU binding. In terms of biological role, protease subunit of a proteasome-like degradation complex believed to be a general protein degrading machinery. This chain is ATP-dependent protease subunit HslV, found in Rhizorhabdus wittichii (strain DSM 6014 / CCUG 31198 / JCM 15750 / NBRC 105917 / EY 4224 / RW1) (Sphingomonas wittichii).